A 325-amino-acid chain; its full sequence is 7,8-didemethyl-8-hydroxy-5-deazariboflavin synthase (325 aa).

The 241-residue stretch at 1-241 (MTYSKNVFVP…SDIAVQVAPN (241 aa)) folds into the Radical SAM core domain. [4Fe-4S] cluster contacts are provided by Cys-15, Cys-19, and Cys-22.

The protein belongs to the radical SAM superfamily. CofG family. In terms of assembly, consists of two subunits, CofG and CofH. The cofactor is [4Fe-4S] cluster.

The catalysed reaction is 5-amino-5-(4-hydroxybenzyl)-6-(D-ribitylimino)-5,6-dihydrouracil + S-adenosyl-L-methionine = 7,8-didemethyl-8-hydroxy-5-deazariboflavin + 5'-deoxyadenosine + L-methionine + NH4(+) + H(+). The protein operates within cofactor biosynthesis; coenzyme F0 biosynthesis. Catalyzes the radical-mediated synthesis of 7,8-didemethyl-8-hydroxy-5-deazariboflavin from 5-amino-5-(4-hydroxybenzyl)-6-(D-ribitylimino)-5,6-dihydrouracil. This chain is 7,8-didemethyl-8-hydroxy-5-deazariboflavin synthase, found in Methanosarcina barkeri (strain Fusaro / DSM 804).